We begin with the raw amino-acid sequence, 123 residues long: MADLAKIVEDLSNLTVLEAAELSKLLEEKWGVSAAAPVAVAAVGSAAAPAAEEKTEFDVVLVDGGAQKINVIKEVRALTGLGLKEAKDLVEGAPKPIKEGVSKDEAEKIKAQLEAAGAKIELK.

It belongs to the bacterial ribosomal protein bL12 family. As to quaternary structure, homodimer. Part of the ribosomal stalk of the 50S ribosomal subunit. Forms a multimeric L10(L12)X complex, where L10 forms an elongated spine to which 2 to 4 L12 dimers bind in a sequential fashion. Binds GTP-bound translation factors.

Forms part of the ribosomal stalk which helps the ribosome interact with GTP-bound translation factors. Is thus essential for accurate translation. The protein is Large ribosomal subunit protein bL12 of Bartonella bacilliformis (strain ATCC 35685 / KC583 / Herrer 020/F12,63).